A 391-amino-acid chain; its full sequence is Cell cycle checkpoint control protein RAD9A (391 aa).

Phosphotyrosine is present on tyrosine 28. A possesses 3'-5' exonuclease activity region spans residues phenylalanine 51–glutamate 91. The interval serine 266–glycine 391 is sufficient for interaction with ABL1. The span at threonine 268–glutamine 282 shows a compositional bias: basic and acidic residues. 2 disordered regions span residues threonine 268–aspartate 301 and serine 319–glycine 391. Serine 272, serine 277, and serine 328 each carry phosphoserine. Serine 341 is subject to Phosphoserine; by CK2. Residues serine 375 and serine 380 each carry the phosphoserine modification. Serine 387 carries the phosphoserine; by CK2 modification.

This sequence belongs to the rad9 family. In terms of assembly, component of the toroidal 9-1-1 (RAD9-RAD1-HUS1) complex, composed of RAD9A, RAD1 and HUS1. The 9-1-1 complex associates with LIG1, POLB, FEN1, RAD17, HDAC1, RPA1 and RPA2. The 9-1-1 complex associates with the RAD17-RFC complex. RAD9A interacts with BCL2L1, FEN1, RAD9B, ABL1, RPA1, ATAD5 and RPA2. Interacts with DNAJC7. Interacts (when phosphorylated) with TOPBP1. In terms of processing, constitutively phosphorylated on serine and threonine amino acids in absence of DNA damage. Hyperphosphorylated by PRKCD and ABL1 upon DNA damage. Its phosphorylation by PRKCD may be required for the formation of the 9-1-1 complex. Phosphorylated at Ser-341 and Ser-387 by CK2, promoting interaction with TOPBP1.

It is found in the nucleus. It catalyses the reaction Exonucleolytic cleavage in the 3'- to 5'-direction to yield nucleoside 5'-phosphates.. Functionally, component of the 9-1-1 cell-cycle checkpoint response complex that plays a major role in DNA repair. The 9-1-1 complex is recruited to DNA lesion upon damage by the RAD17-replication factor C (RFC) clamp loader complex. Acts then as a sliding clamp platform on DNA for several proteins involved in long-patch base excision repair (LP-BER). The 9-1-1 complex stimulates DNA polymerase beta (POLB) activity by increasing its affinity for the 3'-OH end of the primer-template and stabilizes POLB to those sites where LP-BER proceeds; endonuclease FEN1 cleavage activity on substrates with double, nick, or gap flaps of distinct sequences and lengths; and DNA ligase I (LIG1) on long-patch base excision repair substrates. The 9-1-1 complex is necessary for the recruitment of RHNO1 to sites of double-stranded breaks (DSB) occurring during the S phase. RAD9A possesses 3'-&gt;5' double stranded DNA exonuclease activity. This chain is Cell cycle checkpoint control protein RAD9A (RAD9A), found in Homo sapiens (Human).